The following is a 356-amino-acid chain: 3'-5' exonuclease (356 aa).

The tract at residues 1-120 is disordered; sequence MDKYLIKMPT…TPSPEKEKPE (120 aa). Basic and acidic residues-rich tracts occupy residues 29–56 and 71–85; these read TIDK…ENTP and KNQD…IKNE. The span at 99–113 shows a compositional bias: low complexity; it reads LTRSTRSMAEEGTPS. A phosphoserine mark is found at S105 and S113. In terms of domain architecture, 3'-5' exonuclease spans 155–316; sequence TTLDVVPMAF…GQVIYRDLEQ (162 aa). Mg(2+) contacts are provided by D165, E167, and D303.

Belongs to the WRNexo family.

The protein localises to the nucleus. In terms of biological role, has exonuclease activity on both single-stranded and duplex templates bearing overhangs, but not blunt ended duplex DNA, and cleaves in a 3'-5' direction. Essential for the formation of DNA replication focal centers. Has an important role in maintaining genome stability. The polypeptide is 3'-5' exonuclease (Drosophila willistoni (Fruit fly)).